A 214-amino-acid chain; its full sequence is MALGILGRKVGMTQIFSPEGLAIPVTVVQAGPCTVTQIKTQATDGYNAVQLGYWPTAEKHLTRAQRGHLSKAGVTELLRHLREFRVDQPEAYQLGQKITVEIFSPGQLLDVAGTSIGRGFAGYQKRHHFGRGPMSHGSKNHRRPGSVGAGTTPGRVFPGLRMAGRMGGCRVTIRKLQLVQVDPERNLLIIKGSVPGVEGGLLEITPAKQVGNKR.

Residues 129-155 (FGRGPMSHGSKNHRRPGSVGAGTTPGR) are disordered.

The protein belongs to the universal ribosomal protein uL3 family. Part of the 50S ribosomal subunit. Forms a cluster with proteins L14 and L19.

One of the primary rRNA binding proteins, it binds directly near the 3'-end of the 23S rRNA, where it nucleates assembly of the 50S subunit. This chain is Large ribosomal subunit protein uL3, found in Synechococcus sp. (strain JA-3-3Ab) (Cyanobacteria bacterium Yellowstone A-Prime).